We begin with the raw amino-acid sequence, 100 residues long: Urease subunit gamma (100 aa).

It belongs to the urease gamma subunit family. As to quaternary structure, heterotrimer of UreA (gamma), UreB (beta) and UreC (alpha) subunits. Three heterotrimers associate to form the active enzyme.

Its subcellular location is the cytoplasm. It carries out the reaction urea + 2 H2O + H(+) = hydrogencarbonate + 2 NH4(+). The protein operates within nitrogen metabolism; urea degradation; CO(2) and NH(3) from urea (urease route): step 1/1. The polypeptide is Urease subunit gamma (Streptomyces griseus subsp. griseus (strain JCM 4626 / CBS 651.72 / NBRC 13350 / KCC S-0626 / ISP 5235)).